Here is a 317-residue protein sequence, read N- to C-terminus: 17-beta-hydroxysteroid dehydrogenase type 6 (317 aa).

Positions 1–17 are cleaved as a signal peptide; it reads MWFYLVTLVGLYYLLRW. 33–57 serves as a coordination point for NAD(+); the sequence is FITGCDSGFGNLLARQLDRRGMRVL. N161 carries an N-linked (GlcNAc...) asparagine glycan. S164 is a substrate binding site. The active-site Proton acceptor is Y176.

The protein belongs to the short-chain dehydrogenases/reductases (SDR) family. Detected in prostate, liver and kidney.

It is found in the microsome membrane. Its subcellular location is the endoplasmic reticulum membrane. The catalysed reaction is all-trans-retinol--[retinol-binding protein] + NAD(+) = all-trans-retinal--[retinol-binding protein] + NADH + H(+). It catalyses the reaction all-trans-retinol + NAD(+) = all-trans-retinal + NADH + H(+). The enzyme catalyses androsterone + NAD(+) = 5alpha-androstan-3,17-dione + NADH + H(+). It carries out the reaction testosterone + NAD(+) = androst-4-ene-3,17-dione + NADH + H(+). The catalysed reaction is 5alpha-androstane-3alpha,17beta-diol + NAD(+) = 17beta-hydroxy-5alpha-androstan-3-one + NADH + H(+). It catalyses the reaction 17beta-estradiol + NAD(+) = estrone + NADH + H(+). The enzyme catalyses 17beta-estradiol + NADP(+) = estrone + NADPH + H(+). It carries out the reaction 3alpha-hydroxy-5alpha-pregnan-20-one + NAD(+) = 5alpha-pregnane-3,20-dione + NADH + H(+). The catalysed reaction is 5alpha-androstane-3beta,17beta-diol + NAD(+) = 17beta-hydroxy-5alpha-androstan-3-one + NADH + H(+). It catalyses the reaction 3beta-hydroxy-5alpha-androstan-17-one + NAD(+) = 5alpha-androstan-3,17-dione + NADH + H(+). Its activity is regulated as follows. Competitively inhibited by 9-cis-retinoic acid and 13-cis-retinoic acid. Its function is as follows. NAD-dependent oxidoreductase with broad substrate specificity that shows both oxidative and reductive activity (in vitro). Has retinol dehydrogenase activity towards all-trans-retinol (in vitro). Has 17-beta-hydroxysteroid dehydrogenase activity towards various steroids (in vitro). Converts 5-alpha-androstan-3-alpha,17-beta-diol to androsterone and estradiol to estrone (in vitro). Has 3-alpha-hydroxysteroid dehydrogenase activity towards androsterone (in vitro). This Rattus norvegicus (Rat) protein is 17-beta-hydroxysteroid dehydrogenase type 6 (Hsd17b6).